A 107-amino-acid chain; its full sequence is Large ribosomal subunit protein uL24 (107 aa).

The protein belongs to the universal ribosomal protein uL24 family. Part of the 50S ribosomal subunit.

Functionally, one of two assembly initiator proteins, it binds directly to the 5'-end of the 23S rRNA, where it nucleates assembly of the 50S subunit. In terms of biological role, one of the proteins that surrounds the polypeptide exit tunnel on the outside of the subunit. This Kosmotoga olearia (strain ATCC BAA-1733 / DSM 21960 / TBF 19.5.1) protein is Large ribosomal subunit protein uL24.